We begin with the raw amino-acid sequence, 367 residues long: Germination protease (367 aa).

Residues 1-15 (MKEPLDLSKYSVRTD) constitute a propeptide that is removed on maturation.

Belongs to the peptidase A25 family. In terms of assembly, homotetramer. Post-translationally, autoproteolytically processed. The inactive tetrameric zymogen termed p46 autoprocesses to a smaller form termed p41, which is active only during spore germination.

It carries out the reaction Endopeptidase action with P4 Glu or Asp, P1 preferably Glu &gt; Asp, P1' hydrophobic and P2' Ala.. Functionally, initiates the rapid degradation of small, acid-soluble proteins during spore germination. This chain is Germination protease, found in Bacillus thuringiensis subsp. konkukian (strain 97-27).